The sequence spans 693 residues: MKIFREVFELGNKEIILETGGMARQADGSVTVSCGNNVVLVTTVVKKSVADGTDFFPLSVHYLEKTYAAGKIPGGFLRREGRPSEEQILISRLIDRSIRPSFPDGFFNEIQIVATVLSYDGAFSPDILALIGASASLAISGAPYDDVVAGVRVGYTNGKYILNPNKQDLRDSDLDLVVSGTYDAILMVESEANSLPESVMLGGILYAHKHLKTIINSINRLAKVASKPRIEYSIYQINKFLKSQIKSQFFGEIKNTYTIASKQERNLKLNAIRKNVLEYIFSSDVDGNEYTEKEILEAFHDIEKDLVRSNILEGKPRIDGRCTETIRPINVKIGVLPGVHGSALFTRGETQALVVTTLGSDRDAQLVESLDGIEKCRYMLHYNFPPYSVGECGMVGMAPKRREIGHANLAKRATQAVFPNEEAYPYVVRVVSEILESNGSSSMATVCGSSLSMMDAGVPIAEPVAGIAMGLIKDGAKYAVLSDILGDEDHLGDMDFKVAGTRYGVTALQMDIKIKGISREILEQALEQARVGRLHILGIMNEVIKEHKEAVSDVAPQIHVMNINPAKIKDVVGRGGATVKGIVEKTGAQIDTSDSGEVKVFAKDKKSMDMAVAMIEEIVAEVEEGQVYKGKIVKLLDSGVFVNLLGSQDGYLPFSEIEQAGMKTNSLVEGQGLEVLVQNIDRGGRVKLSLVAR.

2 residues coordinate Mg(2+): Asp489 and Asp495. A KH domain is found at 556–615; sequence PQIHVMNINPAKIKDVVGRGGATVKGIVEKTGAQIDTSDSGEVKVFAKDKKSMDMAVAMI. One can recognise an S1 motif domain in the interval 625-693; sequence GQVYKGKIVK…GRVKLSLVAR (69 aa).

The protein belongs to the polyribonucleotide nucleotidyltransferase family. Component of the RNA degradosome, which is a multiprotein complex involved in RNA processing and mRNA degradation. Mg(2+) serves as cofactor.

It localises to the cytoplasm. It catalyses the reaction RNA(n+1) + phosphate = RNA(n) + a ribonucleoside 5'-diphosphate. Its function is as follows. Involved in mRNA degradation. Catalyzes the phosphorolysis of single-stranded polyribonucleotides processively in the 3'- to 5'-direction. The polypeptide is Polyribonucleotide nucleotidyltransferase (Francisella tularensis subsp. holarctica (strain FTNF002-00 / FTA)).